The sequence spans 486 residues: Keratin, type II cuticular Hb6 (486 aa).

Positions 1–106 (MTCGSYCGGR…PNAQCVKHEE (106 aa)) are head. The region spanning 106-417 (EKEQIKCLNS…RLLEGEEQRL (312 aa)) is the IF rod domain. The interval 107–141 (KEQIKCLNSKFAAFIDKVRFLEQQNKLLETKWQFY) is coil 1A. The linker 1 stretch occupies residues 142–151 (QNRKCCESNM). Positions 152–252 (EPLFEGYIEA…YDEETRILHS (101 aa)) are coil 1B. Lysine 212 participates in a covalent cross-link: Glycyl lysine isopeptide (Lys-Gly) (interchain with G-Cter in SUMO1). The tract at residues 253-269 (HISDTSIVVKMDNSRDL) is linker 12. Residues 270-413 (NMDCVVAEIK…TTYRRLLEGE (144 aa)) are coil 2. Residues 414 to 486 (EQRLCEGVGS…GACSGGCKKC (73 aa)) form a tail region.

The protein belongs to the intermediate filament family. In terms of assembly, heterotetramer of two type I and two type II keratins.

The protein is Keratin, type II cuticular Hb6 (Krt86) of Mus musculus (Mouse).